Reading from the N-terminus, the 20-residue chain is Pregnancy-associated glycoprotein 71D (20 aa).

Asparagine 4 carries an N-linked (GlcNAc...) asparagine glycan.

The protein belongs to the peptidase A1 family. As to expression, chorionic epithelium (trophectoderm) and placental cotyledons.

It is found in the secreted. The protein resides in the extracellular space. This chain is Pregnancy-associated glycoprotein 71D, found in Bison bonasus (European bison).